The chain runs to 325 residues: GMP reductase (325 aa).

Cys-173 (thioimidate intermediate) is an active-site residue. Residue 202–225 (IIADGGIRHHGDIAKSVRFGAAMV) coordinates NADP(+).

It belongs to the IMPDH/GMPR family. GuaC type 2 subfamily.

It carries out the reaction IMP + NH4(+) + NADP(+) = GMP + NADPH + 2 H(+). Functionally, catalyzes the irreversible NADPH-dependent deamination of GMP to IMP. It functions in the conversion of nucleobase, nucleoside and nucleotide derivatives of G to A nucleotides, and in maintaining the intracellular balance of A and G nucleotides. This Leptothrix cholodnii (strain ATCC 51168 / LMG 8142 / SP-6) (Leptothrix discophora (strain SP-6)) protein is GMP reductase.